Here is a 324-residue protein sequence, read N- to C-terminus: Alkanal monooxygenase beta chain (324 aa).

This sequence belongs to the bacterial luciferase oxidoreductase family. In terms of assembly, heterodimer of an alpha and a beta chain.

The enzyme catalyses a long-chain fatty aldehyde + FMNH2 + O2 = a long-chain fatty acid + hnu + FMN + H2O + 2 H(+). Functionally, light-emitting reaction in luminous bacteria. The specific role of the beta subunit is unknown, but it is absolutely required for bioluminescence activity. In Vibrio harveyi (Beneckea harveyi), this protein is Alkanal monooxygenase beta chain (luxB).